Reading from the N-terminus, the 257-residue chain is NH(3)-dependent NAD(+) synthetase (257 aa).

28-35 (GISGGVDS) is an ATP binding site. Asp34 is a binding site for Mg(2+). Deamido-NAD(+) is bound at residue Arg109. Thr129 serves as a coordination point for ATP. Glu134 contacts Mg(2+). Lys142 and Asp149 together coordinate deamido-NAD(+). Residues Lys158 and Ser180 each contribute to the ATP site. 240–241 (HK) is a binding site for deamido-NAD(+).

It belongs to the NAD synthetase family. As to quaternary structure, homodimer.

It carries out the reaction deamido-NAD(+) + NH4(+) + ATP = AMP + diphosphate + NAD(+) + H(+). It functions in the pathway cofactor biosynthesis; NAD(+) biosynthesis; NAD(+) from deamido-NAD(+) (ammonia route): step 1/1. Its function is as follows. Catalyzes the ATP-dependent amidation of deamido-NAD to form NAD. Uses ammonia as a nitrogen source. In Pyrococcus furiosus (strain ATCC 43587 / DSM 3638 / JCM 8422 / Vc1), this protein is NH(3)-dependent NAD(+) synthetase.